Reading from the N-terminus, the 1436-residue chain is MGARASVLSGGKLDAWEKIRLRPGGKKKYRLKHLVWASRELERFALNPGLLETSDGCKQIIGQLQPAIRTGSEELRSLFNTVATLYCVHERIEVKDTKEALEKMEEEQNKSKNKKAQQAAADAGNNSQVSQNYPIVQNLQGQMVHQAISPRTLNAWVKVIEEKAFSPEVIPMFSALSEGATPQDLNTMLNTVGGHQAAMQMLKETINEEAAEWDRLHPVHAGPIAPGQMREPRGSDIAGTTSTLQEQIAWMTSNPPIPVGEIYKRWIILGLNKIVRMYSPVSILDIRQGPKEPFRDYVDRFYKTLRAEQASQEVKGWMTETLLVQNANPDCKTILKALGPQATLEEMMTACQGVGGPSHKARVLAEAMSQATNSAAAVMMQRGNFKGPRKTIKCFNCGKEGHIAKNCRAPRRKGCWKCGKEGHQLKDCTERQANFLREDLAFPQGKAGELSSEQTRANSPTSRELRVWGRDNPLSETGAERQGTVSFNCPQITLWQRPLVTIKIGGQLKEALLDTGADDTVLEEMNLPGKWKPKMIGGIGGFIKVRQYDQILIEICGHKAIGTVLVGPTPVNIIGRNLLTQIGCTLNFPISPIETVPVKLKPGMDGPKVKQWPLTEEKIKALTEICTEMEKEGKISRVGPENPYNTPIFAIKKKDSTKWRKLVDFRELNKRTQDFWEVQLGIPHPAGLKKKKSVTVLDVGDAYFSVPLDKDFRKYTAFTIPSINNETPGIRYQYNVLPQGWKGSPAIFQSSMTKILEPFRKQNPEIVIYQYMDDLYVGSDLEIGQHRTKIEELREHLLRWGFTTPDKKHQKEPPFLWMGYELHPDKWTVQSIKLPEKESWTVNDIQKLVGKLNWASQIYPGIKVRQLCKLLRGTKALTEVIPLTEEAELELAENREILKEPVHGVYYDPSKDLIAEIQKQGHGQWTYQIYQEPFKNLKTGKYARMRGAHTNDVKQLAEVVQKISTESIVIWGKTPKFRLPIQKETWETWWVEYWQATWIPEWEFVNTPPLVKLWYQLEKEPIIGAETFYVDGAANRETKLGKAGYVTDRGRQKVVPFTDTTNQKTELQAINLALQDSGLEVNIVTDSQYALGIIQAQPDKSESELVSQIIEQLIKKEKVYLAWVPAHKGIGGNEQVDKLVSQGIRKVLFLDGIDKAQEEHEKYHNNWRAMASDFNLPPVVAKEIVASCDKCQLKGEAMHGQVDCSPGIWQLDCTHLEGKVILVAVHVASGYIEAEVIPAETGQETAYFILKLAGRWPVKIVHTDNGSNFTSAAVKAACWWAGIKQEFGIPYNPQSQGVVESMNKELKKIIGQVRDQAEHLKTAVQMAVFIHNFKRKGGIGGYSAGERIIDIIATDIQTKELQKQITKIQNFRVYYRDSRDPIWKGPAKLLWKGEGAVVIQDNSDIKVVPRRKVKIIRDYGKQMAGDDCVASRQDED.

Gly-2 carries N-myristoyl glycine; by host lipidation. The interval 7 to 31 is interaction with Gp41; the sequence is VLSGGKLDAWEKIRLRPGGKKKYRL. An interaction with host CALM1 region spans residues 8–43; it reads LSGGKLDAWEKIRLRPGGKKKYRLKHLVWASRELER. The tract at residues 12-19 is interaction with host AP3D1; it reads KLDAWEKI. Positions 14–33 are interaction with membrane phosphatidylinositol 4,5-bisphosphate and RNA; the sequence is DAWEKIRLRPGGKKKYRLKH. The Nuclear export signal signature appears at 16-22; it reads WEKIRLR. Positions 26-32 match the Nuclear localization signal motif; the sequence is KKKYRLK. The tract at residues 73–77 is interaction with membrane phosphatidylinositol 4,5-bisphosphate; the sequence is EELRS. A disordered region spans residues 102–129; sequence EKMEEEQNKSKNKKAQQAAADAGNNSQV. The segment covering 116 to 128 has biased composition (low complexity); that stretch reads AQQAAADAGNNSQ. Phosphotyrosine; by host is present on Tyr-133. Residues 190–228 are interaction with human PPIA/CYPA and NUP153; that stretch reads NTVGGHQAAMQMLKETINEEAAEWDRLHPVHAGPIAPGQ. The interval 278-364 is dimerization/Multimerization of capsid protein p24; that stretch reads YSPVSILDIR…GGPSHKARVL (87 aa). 2 CCHC-type zinc fingers span residues 392–409 and 413–430; these read IKCF…NCRA and KGCW…DCTE. Residues 490-494 are dimerization of protease; sequence PQITL. In terms of domain architecture, Peptidase A2 spans 509-578; sequence KEALLDTGAD…TPVNIIGRNL (70 aa). Asp-514 functions as the For protease activity; shared with dimeric partner in the catalytic mechanism. Dimerization of protease regions lie at residues 538–544 and 577–589; these read GIGGFIK and NLLT…LNFP. One can recognise a Reverse transcriptase domain in the interval 632 to 822; the sequence is EGKISRVGPE…PPFLWMGYEL (191 aa). The Mg(2+) site is built by Asp-698, Asp-773, and Asp-774. Positions 815-823 are RT 'primer grip'; it reads FLWMGYELH. Positions 986-1002 match the Tryptophan repeat motif motif; it reads WETWWVEYWQATWIPEW. The region spanning 1022–1145 is the RNase H type-1 domain; the sequence is IIGAETFYVD…VDKLVSQGIR (124 aa). Mg(2+) is bound by residues Asp-1031, Glu-1066, Asp-1086, and Asp-1137. An Integrase-type zinc finger spans residues 1151-1192; that stretch reads DGIDKAQEEHEKYHNNWRAMASDFNLPPVVAKEIVASCDKCQ. Zn(2+)-binding residues include His-1160, His-1164, Cys-1188, and Cys-1191. One can recognise an Integrase catalytic domain in the interval 1202-1352; sequence VDCSPGIWQL…SAGERIIDII (151 aa). 3 residues coordinate Mg(2+): Asp-1212, Asp-1264, and Glu-1300. Positions 1371–1418 form a DNA-binding region, integrase-type; that stretch reads FRVYYRDSRDPIWKGPAKLLWKGEGAVVIQDNSDIKVVPRRKVKIIRD.

Homotrimer; further assembles as hexamers of trimers. Interacts with gp41 (via C-terminus). Interacts with host CALM1; this interaction induces a conformational change in the Matrix protein, triggering exposure of the myristate group. Interacts with host AP3D1; this interaction allows the polyprotein trafficking to multivesicular bodies during virus assembly. Part of the pre-integration complex (PIC) which is composed of viral genome, matrix protein, Vpr and integrase. In terms of assembly, homodimer; the homodimer further multimerizes as homohexamers or homopentamers. Interacts with human PPIA/CYPA; This interaction stabilizes the capsid. Interacts with human NUP153. Interacts with host PDZD8; this interaction stabilizes the capsid. Interacts with monkey TRIM5; this interaction destabilizes the capsid. As to quaternary structure, homodimer, whose active site consists of two apposed aspartic acid residues. Heterodimer of p66 RT and p51 RT (RT p66/p51). Heterodimerization of RT is essential for DNA polymerase activity. The overall folding of the subdomains is similar in p66 RT and p51 RT but the spatial arrangements of the subdomains are dramatically different. In terms of assembly, homotetramer; may further associate as a homohexadecamer. Part of the pre-integration complex (PIC) which is composed of viral genome, matrix protein, Vpr and integrase. Interacts with human SMARCB1/INI1 and human PSIP1/LEDGF isoform 1. Interacts with human KPNA3; this interaction might play a role in nuclear import of the pre-integration complex. Interacts with human NUP153; this interaction might play a role in nuclear import of the pre-integration complex. Mg(2+) is required as a cofactor. Specific enzymatic cleavages by the viral protease yield mature proteins. The protease is released by autocatalytic cleavage. The polyprotein is cleaved during and after budding, this process is termed maturation. Proteolytic cleavage of p66 RT removes the RNase H domain to yield the p51 RT subunit. Nucleocapsid protein p7 might be further cleaved after virus entry. In terms of processing, tyrosine phosphorylated presumably in the virion by a host kinase. Phosphorylation is apparently not a major regulator of membrane association. Post-translationally, phosphorylated possibly by host MAPK1; this phosphorylation is necessary for Pin1-mediated virion uncoating. Methylated by host PRMT6, impairing its function by reducing RNA annealing and the initiation of reverse transcription.

Its subcellular location is the host cell membrane. It is found in the host endosome. The protein resides in the host multivesicular body. It localises to the virion membrane. The protein localises to the host nucleus. Its subcellular location is the host cytoplasm. It is found in the virion. The enzyme catalyses Specific for a P1 residue that is hydrophobic, and P1' variable, but often Pro.. It catalyses the reaction Endohydrolysis of RNA in RNA/DNA hybrids. Three different cleavage modes: 1. sequence-specific internal cleavage of RNA. Human immunodeficiency virus type 1 and Moloney murine leukemia virus enzymes prefer to cleave the RNA strand one nucleotide away from the RNA-DNA junction. 2. RNA 5'-end directed cleavage 13-19 nucleotides from the RNA end. 3. DNA 3'-end directed cleavage 15-20 nucleotides away from the primer terminus.. The catalysed reaction is 3'-end directed exonucleolytic cleavage of viral RNA-DNA hybrid.. It carries out the reaction DNA(n) + a 2'-deoxyribonucleoside 5'-triphosphate = DNA(n+1) + diphosphate. Its activity is regulated as follows. Protease: The viral protease is inhibited by many synthetic protease inhibitors (PIs), such as amprenavir, atazanavir, indinavir, loprinavir, nelfinavir, ritonavir and saquinavir. Use of protease inhibitors in tritherapy regimens permit more ambitious therapeutic strategies. Reverse transcriptase/ribonuclease H: RT can be inhibited either by nucleoside RT inhibitors (NRTIs) or by non nucleoside RT inhibitors (NNRTIs). NRTIs act as chain terminators, whereas NNRTIs inhibit DNA polymerization by binding a small hydrophobic pocket near the RT active site and inducing an allosteric change in this region. Classical NRTIs are abacavir, adefovir (PMEA), didanosine (ddI), lamivudine (3TC), stavudine (d4T), tenofovir (PMPA), zalcitabine (ddC), and zidovudine (AZT). Classical NNRTIs are atevirdine (BHAP U-87201E), delavirdine, efavirenz (DMP-266), emivirine (I-EBU), and nevirapine (BI-RG-587). The tritherapies used as a basic effective treatment of AIDS associate two NRTIs and one NNRTI. Mediates, with Gag polyprotein, the essential events in virion assembly, including binding the plasma membrane, making the protein-protein interactions necessary to create spherical particles, recruiting the viral Env proteins, and packaging the genomic RNA via direct interactions with the RNA packaging sequence (Psi). Gag-Pol polyprotein may regulate its own translation, by the binding genomic RNA in the 5'-UTR. At low concentration, the polyprotein would promote translation, whereas at high concentration, the polyprotein would encapsidate genomic RNA and then shut off translation. In terms of biological role, targets the polyprotein to the plasma membrane via a multipartite membrane-binding signal, that includes its myristoylated N-terminus. Matrix protein is part of the pre-integration complex. Implicated in the release from host cell mediated by Vpu. Binds to RNA. Functionally, forms the conical core that encapsulates the genomic RNA-nucleocapsid complex in the virion. Most core are conical, with only 7% tubular. The core is constituted by capsid protein hexamer subunits. The core is disassembled soon after virion entry. Host restriction factors such as TRIM5-alpha or TRIMCyp bind retroviral capsids and cause premature capsid disassembly, leading to blocks in reverse transcription. Capsid restriction by TRIM5 is one of the factors which restricts HIV-1 to the human species. Host PIN1 apparently facilitates the virion uncoating. On the other hand, interactions with PDZD8 or CYPA stabilize the capsid. Its function is as follows. Encapsulates and protects viral dimeric unspliced genomic RNA (gRNA). Binds these RNAs through its zinc fingers. Acts as a nucleic acid chaperone which is involved in rearangement of nucleic acid secondary structure during gRNA retrotranscription. Also facilitates template switch leading to recombination. As part of the polyprotein, participates in gRNA dimerization, packaging, tRNA incorporation and virion assembly. Aspartyl protease that mediates proteolytic cleavages of Gag and Gag-Pol polyproteins during or shortly after the release of the virion from the plasma membrane. Cleavages take place as an ordered, step-wise cascade to yield mature proteins. This process is called maturation. Displays maximal activity during the budding process just prior to particle release from the cell. Also cleaves Nef and Vif, probably concomitantly with viral structural proteins on maturation of virus particles. Hydrolyzes host EIF4GI and PABP1 in order to shut off the capped cellular mRNA translation. The resulting inhibition of cellular protein synthesis serves to ensure maximal viral gene expression and to evade host immune response. Also mediates cleavage of host YTHDF3. Mediates cleavage of host CARD8, thereby activating the CARD8 inflammasome, leading to the clearance of latent HIV-1 in patient CD4(+) T-cells after viral reactivation; in contrast, HIV-1 can evade CARD8-sensing when its protease remains inactive in infected cells prior to viral budding. In terms of biological role, multifunctional enzyme that converts the viral RNA genome into dsDNA in the cytoplasm, shortly after virus entry into the cell. This enzyme displays a DNA polymerase activity that can copy either DNA or RNA templates, and a ribonuclease H (RNase H) activity that cleaves the RNA strand of RNA-DNA heteroduplexes in a partially processive 3' to 5' endonucleasic mode. Conversion of viral genomic RNA into dsDNA requires many steps. A tRNA(3)-Lys binds to the primer-binding site (PBS) situated at the 5'-end of the viral RNA. RT uses the 3' end of the tRNA primer to perform a short round of RNA-dependent minus-strand DNA synthesis. The reading proceeds through the U5 region and ends after the repeated (R) region which is present at both ends of viral RNA. The portion of the RNA-DNA heteroduplex is digested by the RNase H, resulting in a ssDNA product attached to the tRNA primer. This ssDNA/tRNA hybridizes with the identical R region situated at the 3' end of viral RNA. This template exchange, known as minus-strand DNA strong stop transfer, can be either intra- or intermolecular. RT uses the 3' end of this newly synthesized short ssDNA to perform the RNA-dependent minus-strand DNA synthesis of the whole template. RNase H digests the RNA template except for two polypurine tracts (PPTs) situated at the 5'-end and near the center of the genome. It is not clear if both polymerase and RNase H activities are simultaneous. RNase H probably can proceed both in a polymerase-dependent (RNA cut into small fragments by the same RT performing DNA synthesis) and a polymerase-independent mode (cleavage of remaining RNA fragments by free RTs). Secondly, RT performs DNA-directed plus-strand DNA synthesis using the PPTs that have not been removed by RNase H as primers. PPTs and tRNA primers are then removed by RNase H. The 3' and 5' ssDNA PBS regions hybridize to form a circular dsDNA intermediate. Strand displacement synthesis by RT to the PBS and PPT ends produces a blunt ended, linear dsDNA copy of the viral genome that includes long terminal repeats (LTRs) at both ends. Functionally, catalyzes viral DNA integration into the host chromosome, by performing a series of DNA cutting and joining reactions. This enzyme activity takes place after virion entry into a cell and reverse transcription of the RNA genome in dsDNA. The first step in the integration process is 3' processing. This step requires a complex comprising the viral genome, matrix protein, Vpr and integrase. This complex is called the pre-integration complex (PIC). The integrase protein removes 2 nucleotides from each 3' end of the viral DNA, leaving recessed CA OH's at the 3' ends. In the second step, the PIC enters cell nucleus. This process is mediated through integrase and Vpr proteins, and allows the virus to infect a non dividing cell. This ability to enter the nucleus is specific of lentiviruses, other retroviruses cannot and rely on cell division to access cell chromosomes. In the third step, termed strand transfer, the integrase protein joins the previously processed 3' ends to the 5' ends of strands of target cellular DNA at the site of integration. The 5'-ends are produced by integrase-catalyzed staggered cuts, 5 bp apart. A Y-shaped, gapped, recombination intermediate results, with the 5'-ends of the viral DNA strands and the 3' ends of target DNA strands remaining unjoined, flanking a gap of 5 bp. The last step is viral DNA integration into host chromosome. This involves host DNA repair synthesis in which the 5 bp gaps between the unjoined strands are filled in and then ligated. Since this process occurs at both cuts flanking the HIV genome, a 5 bp duplication of host DNA is produced at the ends of HIV-1 integration. Alternatively, Integrase may catalyze the excision of viral DNA just after strand transfer, this is termed disintegration. The polypeptide is Gag-Pol polyprotein (gag-pol) (Homo sapiens (Human)).